The following is a 90-amino-acid chain: DNA-binding protein HTa (90 aa).

Belongs to the bacterial histone-like protein family. In terms of assembly, homotetramer.

In terms of biological role, histone-like DNA-binding protein which is capable of wrapping DNA to stabilize it, and thus to prevent its denaturation under extreme environmental conditions. The polypeptide is DNA-binding protein HTa (Thermoplasma acidophilum (strain ATCC 25905 / DSM 1728 / JCM 9062 / NBRC 15155 / AMRC-C165)).